Reading from the N-terminus, the 351-residue chain is C-X-C chemokine receptor type 1 (351 aa).

At 1-44 (MAEAEYFIWTNPEGDFEKEFGNITGMLPTGDYFIPCKRVPITNR) the chain is on the extracellular side. Asn22 is a glycosylation site (N-linked (GlcNAc...) asparagine). The chain crosses the membrane as a helical span at residues 45-71 (QALVVFYALVSLLSLLGNSLVMLVILY). Over 72–80 (RRRTRSVMD) the chain is Cytoplasmic. The helical transmembrane segment at 81–101 (VYVLNLAIADLLFSLTLPFLA) threads the bilayer. The Extracellular segment spans residues 102-116 (VSKLKGWIFGTPLCK). Residues Cys115 and Cys192 are joined by a disulfide bond. A helical transmembrane segment spans residues 117-138 (MVSLLKEFNFFSGILLLACISV). At 139–159 (DRYLAIVHATRTLARKRYLVK) the chain is on the cytoplasmic side. The helical transmembrane segment at 160 to 179 (FVCVGIWGLSLILSLPFAIF) threads the bilayer. Over 180-204 (RQAYKPFRSGTVCYEVLGEATTDFR) the chain is Extracellular. Residues 205–225 (MTLRGLSHIFGFLLPLLTMLV) traverse the membrane as a helical segment. Residues 226-247 (CYGLTLRMLFKTHMRQKHRAMG) are Cytoplasmic-facing. Residues 248 to 269 (VIFAVVLVFLLCCLPYNLVLLS) traverse the membrane as a helical segment. At 270-290 (DTLLGAHLIEDTCERRNDIDQ) the chain is on the extracellular side. A helical transmembrane segment spans residues 291 to 313 (ALYITEILGFSHSCLNPIIYAFV). Residues 314-351 (GQNFRHEFLKILANHGLVRKEVLTHRRVAFHTSLTAIY) are Cytoplasmic-facing.

It belongs to the G-protein coupled receptor 1 family. As to quaternary structure, interacts with IL8. Interacts with GNAI2.

The protein resides in the cell membrane. Its function is as follows. Receptor to interleukin-8, which is a powerful neutrophils chemotactic factor. Binding of IL-8 to the receptor causes activation of neutrophils. This response is mediated via a G-protein that activates a phosphatidylinositol-calcium second messenger system. This Mus musculus (Mouse) protein is C-X-C chemokine receptor type 1 (Cxcr1).